The sequence spans 292 residues: G1/S-specific cyclin-D3 (292 aa).

Positions 27-152 constitute a Cyclin N-terminal domain; the sequence is VLQSLLRLEE…LVLGKLKWDL (126 aa). Residues 254 to 292 form a disordered region; the sequence is SLREASQTSSSPAPKAPRGSSSQGPSQTSTPTDVTAIHL. 2 positions are modified to phosphoserine: S264 and S279. The segment covering 272-285 has biased composition (low complexity); that stretch reads GSSSQGPSQTSTPT. At T283 the chain carries Phosphothreonine.

Belongs to the cyclin family. Cyclin D subfamily. In terms of assembly, interacts with the CDK4 and CDK6 protein kinases to form a serine/threonine kinase holoenzyme complex. The cyclin subunit imparts substrate specificity to the complex. Interacts with ATF5. Interacts with EIF3K. Component of the ternary complex cyclin D/CDK4/CDKN1B required for nuclear translocation and modulation of CDK4-mediated kinase activity. Can form similar complexes with either CDKN1A or CDKN2A. Post-translationally, phosphorylation at Thr-283 by MAP kinases is required for ubiquitination and degradation by the DCX(AMBRA1) complex. In terms of processing, ubiquitinated by the DCX(AMBRA1) complex during the transition from G1 to S cell phase, leading to its degradation: ubiquitination is dependent on Thr-283 phosphorylation. The DCX(AMBRA1) complex represents the major regulator of CCND3 stability during the G1/S transition. Polyubiquitinated by the SCF(FBXL2) complex, leading to proteasomal degradation.

The protein localises to the nucleus. The protein resides in the cytoplasm. In terms of biological role, regulatory component of the cyclin D3-CDK4 (DC) complex that phosphorylates and inhibits members of the retinoblastoma (RB) protein family including RB1 and regulates the cell-cycle during G(1)/S transition. Phosphorylation of RB1 allows dissociation of the transcription factor E2F from the RB/E2F complex and the subsequent transcription of E2F target genes which are responsible for the progression through the G(1) phase. Hypophosphorylates RB1 in early G(1) phase. Cyclin D-CDK4 complexes are major integrators of various mitogenenic and antimitogenic signals. Component of the ternary complex, cyclin D3/CDK4/CDKN1B, required for nuclear translocation and activity of the cyclin D-CDK4 complex. Shows transcriptional coactivator activity with ATF5 independently of CDK4. This chain is G1/S-specific cyclin-D3, found in Homo sapiens (Human).